The primary structure comprises 271 residues: (+)-cis,trans-nepetalactol synthase NEPS1 (271 aa).

NAD(+) is bound by residues 24-30 (GGASGIG), 49-51 (DIQ), 72-73 (DV), and Asn99. Residues Thr154 and Tyr167 each coordinate substrate. Residues Tyr167, Lys171, and 200–205 (VLTPLA) contribute to the NAD(+) site. Tyr167 functions as the Proton acceptor in the catalytic mechanism.

This sequence belongs to the short-chain dehydrogenases/reductases (SDR) family.

The catalysed reaction is (S)-8-oxocitronellyl enol = cis-trans-nepetalactol. It catalyses the reaction cis-cis-nepetalactol + NAD(+) = cis-cis-nepetalactone + NADH + H(+). It carries out the reaction cis-trans-nepetalactol + NAD(+) = cis-trans-nepetalactone + NADH + H(+). Its function is as follows. Bifunctional enzyme that possesses cyclase and dehydrogenase activities. Functions as a non-oxidoreductive cyclase to promote the formation of cis-trans-nepetalactol. Functions as dehydrogenase to oxidize cis-cis-nepetalactol and cis-trans-nepetalactol into nepetalactones, metabolites that are both insect-repellent and have euphoric effect in cats. Binds NAD(+) as classical short-chain dehydrogenase/reductase (SDR), but does not utilize it for its redox-neutral cyclase activity. The protein is (+)-cis,trans-nepetalactol synthase NEPS1 of Nepeta racemosa (Catmint).